Reading from the N-terminus, the 204-residue chain is Vacuolar protein-sorting-associated protein 46 (204 aa).

Residues 1-103 (MSRNSAAGLE…ASMGQVCKGM (103 aa)) are interaction with VSP24. S5 is modified (phosphoserine). Coiled coils occupy residues 9–56 (LENT…RIYA) and 109–129 (NMNL…FEDL). The tract at residues 104–204 (DKALQNMNLQ…LAQRLRALRG (101 aa)) is interaction with VSP4. Residues 176–204 (NVPEIKAKEVNVDDEKEDKLAQRLRALRG) form an interaction with VTA1 region. Basic and acidic residues predominate over residues 185 to 196 (VNVDDEKEDKLA). Residues 185–204 (VNVDDEKEDKLAQRLRALRG) form a disordered region.

The protein belongs to the SNF7 family. As to quaternary structure, self-associates. Interacts with VPS4 and VTA1. Interacts with IST1.

Its subcellular location is the endosome membrane. It is found in the endomembrane system. Class E VPS protein implicated in concentration and sorting of cargo proteins of the multivesicular body (MVB) for incorporation into intralumenal vesicles. The lumenal sequestrated membrane proteins will be targeted into the vacuole after fusion of the endosome with the vacuole. Probably acts as a peripherally associated component of the ESCRT-III complex, which appears to be critical for late steps in MVB sorting, such as membrane invagination and final cargo sorting and recruits late-acting components of the sorting machinery. The MVB pathway requires the sequential function of ESCRT-O, -I,-II and -III complex assemblies. Regulates the membrane association of VPS4. Can stimulate VPS4 ATPase activity directly or via VTA1. The sequence is that of Vacuolar protein-sorting-associated protein 46 (DID2) from Saccharomyces cerevisiae (strain ATCC 204508 / S288c) (Baker's yeast).